A 412-amino-acid polypeptide reads, in one-letter code: 1-deoxy-D-xylulose 5-phosphate reductoisomerase (412 aa).

Residues Thr5, Gly6, Ser7, Ile8, Gly31, Arg32, Asn33, and Asn125 each coordinate NADPH. Lys126 is a 1-deoxy-D-xylulose 5-phosphate binding site. Glu127 is an NADPH binding site. Position 151 (Asp151) interacts with Mn(2+). 1-deoxy-D-xylulose 5-phosphate contacts are provided by Ser152, Glu153, Ser189, and His212. Glu153 lines the Mn(2+) pocket. Gly218 provides a ligand contact to NADPH. 1-deoxy-D-xylulose 5-phosphate is bound by residues Ser225, Asn230, Lys231, and Glu234. Mn(2+) is bound at residue Glu234.

Belongs to the DXR family. Mg(2+) is required as a cofactor. The cofactor is Mn(2+).

It carries out the reaction 2-C-methyl-D-erythritol 4-phosphate + NADP(+) = 1-deoxy-D-xylulose 5-phosphate + NADPH + H(+). It functions in the pathway isoprenoid biosynthesis; isopentenyl diphosphate biosynthesis via DXP pathway; isopentenyl diphosphate from 1-deoxy-D-xylulose 5-phosphate: step 1/6. In terms of biological role, catalyzes the NADPH-dependent rearrangement and reduction of 1-deoxy-D-xylulose-5-phosphate (DXP) to 2-C-methyl-D-erythritol 4-phosphate (MEP). This Prochlorococcus marinus (strain SARG / CCMP1375 / SS120) protein is 1-deoxy-D-xylulose 5-phosphate reductoisomerase.